The sequence spans 300 residues: Iron/alpha-ketoglutarate-dependent dioxygenase okaE (300 aa).

Residues His-134, Asp-136, and His-210 each contribute to the Fe cation site.

This sequence belongs to the PhyH family. In terms of assembly, homodimer. Fe cation serves as cofactor.

The catalysed reaction is okaramine A + 2-oxoglutarate + AH2 + O2 = 12-deshydroxyl okaramine E + succinate + A + CO2 + H2O. The enzyme catalyses 12-deshydroxyl okaramine E + 2-oxoglutarate + O2 = okaramine E + succinate + CO2. It carries out the reaction okaramine A + 2-oxoglutarate + O2 = okaramine E + succinate + CO2. Its pathway is alkaloid biosynthesis. It functions in the pathway secondary metabolite biosynthesis; terpenoid biosynthesis. Its function is as follows. Iron/alpha-ketoglutarate-dependent dioxygenase; part of the gene cluster that mediates the biosynthesis of okaramine B, a prenylated indole alkaloid that possesses an unusual octacyclic ring system, including a four-membered azetidine ring and an eight-membered azocine ring, and that exhibits insecticidal activity against silkworm larvae. Within the pathway, okaE forms the unusual 2-dimethyl-3-methyl-azetidine ring to yield 12-deshydroxyl okaramine E from okaramine A. OkaE also catalyzes the hydroxylation of 12-deshydroxyl okaramine E to produce okaramine E. The biosynthesis begins with the NRPS okaA that condenses two tryptophan molecules into cyclo(L-Trp-L-Trp). Prenylation by the prenyltransferase okaC then leads to the formation of cyclo(N8-(alpha,alpha-dimethylallyl)-L-Trp-6a-(alpha,alpha-dime-thylallyl)-L-Trp). This is followed by indole 2,3-epoxidation by the FAD-dependent monooxygenase okaB to facilitate the formation of the hexahydropyrrolo[2,3-b]indole (HPI) moiety of okaramine C. The cytochrome P450 monooxygenase okaD then likely catalyzes formation of the eight-membered ring of okaramine A. The dioxygenase okaE further forms the unusual 2-dimethyl-3-methyl-azetidine ring to yield 12-deshydroxyl okaramine E, as well as the hydroxylation of 12-deshydroxyl okaramine E to produce okaramine E. The cytochrome P450 monoxygenase okaG converts 12-deshydroxyl okaramine E into 3-desmethyl okaramine B which is further methylated by the methyltransferase okaF into okaramine B. In a shunt pathway, okaG and okaF together are also able to convert okaramine E into okaramine D. Okaramine H is produced by nonenzymatic conversion from okaramine A. This Penicillium ochrochloron protein is Iron/alpha-ketoglutarate-dependent dioxygenase okaE.